Consider the following 290-residue polypeptide: Shikimate kinase (290 aa).

Residue 81-91 (PIASGLKSSSA) coordinates ATP.

The protein belongs to the GHMP kinase family. Archaeal shikimate kinase subfamily.

It localises to the cytoplasm. The enzyme catalyses shikimate + ATP = 3-phosphoshikimate + ADP + H(+). Its pathway is metabolic intermediate biosynthesis; chorismate biosynthesis; chorismate from D-erythrose 4-phosphate and phosphoenolpyruvate: step 5/7. This is Shikimate kinase from Methanocella arvoryzae (strain DSM 22066 / NBRC 105507 / MRE50).